The following is a 141-amino-acid chain: ATP synthase epsilon chain (141 aa).

This sequence belongs to the ATPase epsilon chain family. As to quaternary structure, F-type ATPases have 2 components, CF(1) - the catalytic core - and CF(0) - the membrane proton channel. CF(1) has five subunits: alpha(3), beta(3), gamma(1), delta(1), epsilon(1). CF(0) has three main subunits: a, b and c.

The protein localises to the cell inner membrane. Functionally, produces ATP from ADP in the presence of a proton gradient across the membrane. The chain is ATP synthase epsilon chain from Pseudomonas fluorescens (strain ATCC BAA-477 / NRRL B-23932 / Pf-5).